A 72-amino-acid polypeptide reads, in one-letter code: Translation initiation factor IF-1 (72 aa).

In terms of domain architecture, S1-like spans 1–72 (MAKDDVIEVE…TRGRITYRYK (72 aa)). Tyr-60 is subject to Phosphotyrosine.

It belongs to the IF-1 family. As to quaternary structure, component of the 30S ribosomal translation pre-initiation complex which assembles on the 30S ribosome in the order IF-2 and IF-3, IF-1 and N-formylmethionyl-tRNA(fMet); mRNA recruitment can occur at any time during PIC assembly.

The protein localises to the cytoplasm. In terms of biological role, one of the essential components for the initiation of protein synthesis. Stabilizes the binding of IF-2 and IF-3 on the 30S subunit to which N-formylmethionyl-tRNA(fMet) subsequently binds. Helps modulate mRNA selection, yielding the 30S pre-initiation complex (PIC). Upon addition of the 50S ribosomal subunit IF-1, IF-2 and IF-3 are released leaving the mature 70S translation initiation complex. In Geobacillus kaustophilus (strain HTA426), this protein is Translation initiation factor IF-1.